Here is a 219-residue protein sequence, read N- to C-terminus: Transcriptional activator protein rep2 (219 aa).

A zinc finger lies at 177-197 (CSKCNTTFNHSTALMMHEATC).

Transcriptional activator which interacts with the mcb binding subunit complex formed by res2 and cdc10. Rep2 is required for the mitotic cell cycle start. The protein is Transcriptional activator protein rep2 (rep2) of Schizosaccharomyces pombe (strain 972 / ATCC 24843) (Fission yeast).